A 119-amino-acid polypeptide reads, in one-letter code: Large ribosomal subunit protein bL20 (119 aa).

This sequence belongs to the bacterial ribosomal protein bL20 family.

Binds directly to 23S ribosomal RNA and is necessary for the in vitro assembly process of the 50S ribosomal subunit. It is not involved in the protein synthesizing functions of that subunit. The chain is Large ribosomal subunit protein bL20 from Burkholderia ambifaria (strain MC40-6).